A 272-amino-acid chain; its full sequence is Insulin-like growth factor-binding protein 1 (272 aa).

Residues 1 to 25 (MPEVPAAGLWPFLLLLAVQVSTVAS) form the signal peptide. The IGFBP N-terminal domain maps to 28-109 (QPWHCAPCSA…TRGQGACVPE (82 aa)). 5 disulfide bridges follow: cysteine 32/cysteine 59, cysteine 35/cysteine 61, cysteine 43/cysteine 62, cysteine 50/cysteine 65, and cysteine 73/cysteine 86. Residues serine 139, serine 157, and serine 169 each carry the phosphoserine modification. At threonine 170 the chain carries Phosphothreonine. Tyrosine 171 bears the Phosphotyrosine mark. In terms of domain architecture, Thyroglobulin type-1 spans 186–264 (KQPCRRELYK…SLEIRGDPNC (79 aa)). Cystine bridges form between cysteine 189–cysteine 219, cysteine 230–cysteine 241, and cysteine 243–cysteine 264. Serine 255 carries the post-translational modification Phosphoserine. Residues 259 to 261 (RGD) carry the Cell attachment site motif.

As to quaternary structure, binds equally well IGF1 and IGF2. Interacts with integrin ITGA5:ITGB1. Interacts with VHL; this interaction inhibits HIF1A degradation.

It is found in the secreted. Multifunctional protein that plays a critical role in regulating the availability of IGFs such as IGF1 and IGF2 to their receptors and thereby regulates IGF-mediated cellular processes including cell migration, proliferation, differentiation or apoptosis in a cell-type specific manner. Also plays a positive role in cell migration by interacting with integrin ITGA5:ITGB1 through its RGD motif. Mechanistically, binding to integrins leads to activation of focal adhesion kinase/PTK2 and stimulation of the mitogen-activated protein kinase (MAPK) pathway. Regulates cardiomyocyte apoptosis by suppressing HIF-1alpha/HIF1A degradation through ubiquitination. This chain is Insulin-like growth factor-binding protein 1 (IGFBP1), found in Ictidomys tridecemlineatus (Thirteen-lined ground squirrel).